Reading from the N-terminus, the 420-residue chain is Na(+)/H(+) antiporter NhaA (420 aa).

Helical transmembrane passes span 34–54 (TTGGMLMLAATVAALLWANLG), 69–89 (LTIEQWAADGLLTVFFFIAGL), 107–127 (LVPIVAAVCGMVFPAGIYTLF), 141–161 (IPMATDIAFALAVLAIVGAGL), 168–190 (FLLTLAIADDLGSIIVIAVFFST), 194–213 (IWWLAGAIACIGLWGVMQHF), 271–291 (WSAGVVVPFFALMSAGVHVSG), 301–321 (PISLGIVCGLILGKVIGITLG), 342–362 (IIAVAVLAGIGFTVSMLMTDL), and 374–394 (AKASVLMASFLAAILGGAMLH).

This sequence belongs to the NhaA Na(+)/H(+) (TC 2.A.33) antiporter family.

It is found in the cell membrane. It catalyses the reaction Na(+)(in) + 2 H(+)(out) = Na(+)(out) + 2 H(+)(in). Its function is as follows. Na(+)/H(+) antiporter that extrudes sodium in exchange for external protons. This is Na(+)/H(+) antiporter NhaA from Cutibacterium acnes (strain DSM 16379 / KPA171202) (Propionibacterium acnes).